The primary structure comprises 94 residues: Protein SKIP34 (94 aa).

A disordered region spans residues 1 to 27 (MCYGHNQSLSSRSSLRRRSHDGEDDSV). Residues 23 to 61 (EDDSVVDDLRDRLAETEARLRRARAREAELSRRLEHMKR) are a coiled coil.

In terms of assembly, interacts with SPK1B/ASK2.

The sequence is that of Protein SKIP34 (SKIP34) from Arabidopsis thaliana (Mouse-ear cress).